Reading from the N-terminus, the 301-residue chain is Probable alpha-L-glutamate ligase (301 aa).

The region spanning 104-287 (LQLLSRRGIG…VAGIIIEHIE (184 aa)) is the ATP-grasp domain. Residues lysine 141, 178 to 179 (EY), aspartate 187, and 211 to 213 (RSN) each bind ATP. Positions 248, 260, and 262 each coordinate Mg(2+). Mn(2+) is bound by residues aspartate 248, glutamate 260, and asparagine 262.

Belongs to the RimK family. It depends on Mg(2+) as a cofactor. The cofactor is Mn(2+).

This chain is Probable alpha-L-glutamate ligase, found in Pseudomonas fluorescens (strain ATCC BAA-477 / NRRL B-23932 / Pf-5).